The chain runs to 97 residues: Class II hydrophobin NC2 (97 aa).

Positions 1–17 (MQFTIATVLSLLTITLA) are cleaved as a signal peptide. 4 cysteine pairs are disulfide-bonded: Cys-31/Cys-79, Cys-40/Cys-70, Cys-41/Cys-53, and Cys-80/Cys-91. Asn-62 carries N-linked (GlcNAc...) asparagine glycosylation.

This sequence belongs to the cerato-ulmin hydrophobin family. In terms of assembly, homotrimer. Further self-assembles to form highly ordered films at water-air interfaces through intermolecular interactions.

It is found in the secreted. The protein resides in the cell wall. Functionally, aerial growth, conidiation, and dispersal of filamentous fungi in the environment rely upon a capability of their secreting small amphipathic proteins called hydrophobins (HPBs) with low sequence identity. Class I can self-assemble into an outermost layer of rodlet bundles on aerial cell surfaces, conferring cellular hydrophobicity that supports fungal growth, development and dispersal; whereas Class II form highly ordered films at water-air interfaces through intermolecular interactions but contribute nothing to the rodlet structure. NC2 is a class II hydrophobin that has the potential to adsorb to the hydrophobic interface at the hydrophobic-hydrophilic interface at very high rate but the predicted self-assembly NC2 film possesses a lower flexural rigidity than other class II hydrophobins such as HFBII from Hypocrea jecorina (also known as Trichoderma reesei). The polypeptide is Class II hydrophobin NC2 (Neurospora crassa (strain ATCC 24698 / 74-OR23-1A / CBS 708.71 / DSM 1257 / FGSC 987)).